We begin with the raw amino-acid sequence, 204 residues long: Thymidylate kinase (204 aa).

Belongs to the thymidylate kinase family. As to quaternary structure, homodimer; the dimer arrangement is orthogonal and not antiparallel as in human enzyme.

The catalysed reaction is dTMP + ATP = dTDP + ADP. It participates in pyrimidine metabolism; dTTP biosynthesis. Functionally, poxvirus TMP kinase is able to phosphorylate dTMP, dUMP and also dGMP from any purine and pyrimidine nucleoside triphosphate. The large substrate specificity is explained by the presence of a canal connecting the edge of the dimer interface to the TMP base binding pocket, canal not found in the human homolog. The sequence is that of Thymidylate kinase (OPG178) from Cynomys gunnisoni (Gunnison's prairie dog).